Here is a 514-residue protein sequence, read N- to C-terminus: Probable cysteine protease ATG4 (514 aa).

Basic and acidic residues predominate over residues 1 to 15 (MAREDASVPRSHDSA). Disordered regions lie at residues 1–28 (MAREDASVPRSHDSADASPNSTAKEIPV) and 61–84 (DSSDDRNNNNSNNGINAAESDSAQ). Cys166 serves as the catalytic Nucleophile. Residues Asp336 and His338 contribute to the active site. The tract at residues 461–514 (ATPSAEDTVPVSTLSASESEITTSSYETPTSKDDNSSRASLDVVVLDTTGEQQE) is disordered. Residues 472–489 (STLSASESEITTSSYETP) are compositionally biased toward low complexity.

This sequence belongs to the peptidase C54 family.

Its subcellular location is the cytoplasm. It localises to the nucleus. The protein resides in the preautophagosomal structure. The enzyme catalyses [protein]-C-terminal L-amino acid-glycyl-phosphatidylethanolamide + H2O = [protein]-C-terminal L-amino acid-glycine + a 1,2-diacyl-sn-glycero-3-phosphoethanolamine. Cysteine protease that plays a key role in cytoplasm to vacuole transport (Cvt) and autophagy by mediating both proteolytic activation and delipidation of ATG8. Required for selective autophagic degradation of the nucleus (nucleophagy) as well as for mitophagy which contributes to regulate mitochondrial quantity and quality by eliminating the mitochondria to a basal level to fulfill cellular energy requirements and preventing excess ROS production. The protease activity is required for proteolytic activation of ATG8: cleaves the C-terminal amino acid of ATG8 to reveal a C-terminal glycine. ATG8 ubiquitin-like activity requires the exposure of the glycine at the C-terminus for its conjugation to phosphatidylethanolamine (PE) and its insertion to membranes, which is necessary for autophagy. The ATG8-PE conjugate mediates tethering between adjacent membranes and stimulates membrane hemifusion, leading to expansion of the autophagosomal membrane during autophagy. In addition to the protease activity, also catalyzes deconjugation of PE-conjugated forms of ATG8 during macroautophagy: ATG8 delipidation is required to release the protein from membranes, which facilitates multiple events during macroautophagy, and especially for efficient autophagosome biogenesis, the assembly of ATG9-containing tubulovesicular clusters into phagophores/autophagosomes, and for the disassembly of PAS-associated ATG components. ATG8 delipidation by ATG4 also recycles ATG8-PE generated on inappropriate membranes to maintain a reservoir of unlipidated ATG8 that is required for autophagosome formation at the PAS. The protein is Probable cysteine protease ATG4 (ATG4) of Scheffersomyces stipitis (strain ATCC 58785 / CBS 6054 / NBRC 10063 / NRRL Y-11545) (Yeast).